The following is a 475-amino-acid chain: Aspartyl/glutamyl-tRNA(Asn/Gln) amidotransferase subunit B (475 aa).

The protein belongs to the GatB/GatE family. GatB subfamily. In terms of assembly, heterotrimer of A, B and C subunits.

The enzyme catalyses L-glutamyl-tRNA(Gln) + L-glutamine + ATP + H2O = L-glutaminyl-tRNA(Gln) + L-glutamate + ADP + phosphate + H(+). The catalysed reaction is L-aspartyl-tRNA(Asn) + L-glutamine + ATP + H2O = L-asparaginyl-tRNA(Asn) + L-glutamate + ADP + phosphate + 2 H(+). Functionally, allows the formation of correctly charged Asn-tRNA(Asn) or Gln-tRNA(Gln) through the transamidation of misacylated Asp-tRNA(Asn) or Glu-tRNA(Gln) in organisms which lack either or both of asparaginyl-tRNA or glutaminyl-tRNA synthetases. The reaction takes place in the presence of glutamine and ATP through an activated phospho-Asp-tRNA(Asn) or phospho-Glu-tRNA(Gln). The chain is Aspartyl/glutamyl-tRNA(Asn/Gln) amidotransferase subunit B from Staphylococcus carnosus (strain TM300).